Here is a 331-residue protein sequence, read N- to C-terminus: Biotin synthase (331 aa).

The Radical SAM core domain occupies 52 to 277 (PDVEVEGIIS…RTMLRFAGGR (226 aa)). [4Fe-4S] cluster-binding residues include Cys67, Cys71, and Cys74. Residues Cys110, Cys143, Cys202, and Arg272 each coordinate [2Fe-2S] cluster.

The protein belongs to the radical SAM superfamily. Biotin synthase family. As to quaternary structure, homodimer. [4Fe-4S] cluster is required as a cofactor. Requires [2Fe-2S] cluster as cofactor.

It catalyses the reaction (4R,5S)-dethiobiotin + (sulfur carrier)-SH + 2 reduced [2Fe-2S]-[ferredoxin] + 2 S-adenosyl-L-methionine = (sulfur carrier)-H + biotin + 2 5'-deoxyadenosine + 2 L-methionine + 2 oxidized [2Fe-2S]-[ferredoxin]. It functions in the pathway cofactor biosynthesis; biotin biosynthesis; biotin from 7,8-diaminononanoate: step 2/2. Its function is as follows. Catalyzes the conversion of dethiobiotin (DTB) to biotin by the insertion of a sulfur atom into dethiobiotin via a radical-based mechanism. In Mycolicibacterium vanbaalenii (strain DSM 7251 / JCM 13017 / BCRC 16820 / KCTC 9966 / NRRL B-24157 / PYR-1) (Mycobacterium vanbaalenii), this protein is Biotin synthase.